The following is a 167-amino-acid chain: MLNRVVLVGRLTKDPEYRTTPSGVSVATFTLAVNRTFTNAQGEREADFINCVVFRRQADNVNNYLSKGSLAGVDGRLQSRNYENQEGRRVFVTEVVCDSVQFLEPKNAQQNGGQRQQNEFQDYGQGFGGQQSGQNNSYNNSSNTKQSDNPFANANGPIDISDDDLPF.

An SSB domain is found at 1-104 (MLNRVVLVGR…VVCDSVQFLE (104 aa)). The interval 107–167 (NAQQNGGQRQ…IDISDDDLPF (61 aa)) is disordered. 2 stretches are compositionally biased toward low complexity: residues 109-118 (QQNGGQRQQN) and 132-147 (SGQN…TKQS). Positions 162-167 (DDDLPF) match the Important for interaction with partner proteins motif.

As to quaternary structure, homotetramer.

In terms of biological role, plays an important role in DNA replication, recombination and repair. Binds to ssDNA and to an array of partner proteins to recruit them to their sites of action during DNA metabolism. The chain is Single-stranded DNA-binding protein 2 (ssb2) from Staphylococcus aureus (strain MSSA476).